Here is a 164-residue protein sequence, read N- to C-terminus: Leucine-rich single-pass membrane protein 2 (164 aa).

A helical transmembrane segment spans residues 97–117 (GFLLLLALLVLTCLVLALLAV).

Its subcellular location is the membrane. The protein is Leucine-rich single-pass membrane protein 2 (LSMEM2) of Homo sapiens (Human).